The sequence spans 223 residues: Ribonuclease HII (223 aa).

The region spanning 32 to 223 is the RNase H type-2 domain; that stretch reads LYIAGVDEVG…LKKRYRDYMS (192 aa). A divalent metal cation contacts are provided by Asp38, Glu39, and Asp130.

This sequence belongs to the RNase HII family. Mn(2+) is required as a cofactor. Mg(2+) serves as cofactor.

Its subcellular location is the cytoplasm. It catalyses the reaction Endonucleolytic cleavage to 5'-phosphomonoester.. In terms of biological role, endonuclease that specifically degrades the RNA of RNA-DNA hybrids. This is Ribonuclease HII from Bartonella henselae (strain ATCC 49882 / DSM 28221 / CCUG 30454 / Houston 1) (Rochalimaea henselae).